We begin with the raw amino-acid sequence, 367 residues long: UDP-N-acetylenolpyruvoylglucosamine reductase 2 (367 aa).

One can recognise an FAD-binding PCMH-type domain in the interval 31 to 198 (IGGKPRSAVR…LAIELQLLTD (168 aa)). Arg176 is a catalytic residue. Catalysis depends on Ser256, which acts as the Proton donor. Residue Glu357 is part of the active site.

Belongs to the MurB family. FAD is required as a cofactor.

It localises to the cytoplasm. The enzyme catalyses UDP-N-acetyl-alpha-D-muramate + NADP(+) = UDP-N-acetyl-3-O-(1-carboxyvinyl)-alpha-D-glucosamine + NADPH + H(+). The protein operates within cell wall biogenesis; peptidoglycan biosynthesis. Cell wall formation. This is UDP-N-acetylenolpyruvoylglucosamine reductase 2 (murB2) from Corynebacterium glutamicum (strain ATCC 13032 / DSM 20300 / JCM 1318 / BCRC 11384 / CCUG 27702 / LMG 3730 / NBRC 12168 / NCIMB 10025 / NRRL B-2784 / 534).